A 274-amino-acid polypeptide reads, in one-letter code: Transmembrane protein 106B (274 aa).

Residues 1 to 11 (MGKSLSHLPLH) show a composition bias toward low complexity. A disordered region spans residues 1 to 20 (MGKSLSHLPLHSSKEDAYDG). Gly2 carries the N-myristoyl glycine lipid modification. At 2 to 96 (GKSLSHLPLH…QRLRPRRTKL (95 aa)) the chain is on the cytoplasmic side. A Phosphoserine modification is found at Ser33. A helical membrane pass occupies residues 97 to 117 (YVMASVFVCLLLSGLAVFFLF). The Lumenal portion of the chain corresponds to 118–274 (PRSIDVKYIG…EYLNVLQPQQ (157 aa)). N-linked (GlcNAc...) asparagine glycans are attached at residues Asn145, Asn151, Asn164, and Asn183. A disulfide bridge links Cys214 with Cys253. The N-linked (GlcNAc...) asparagine glycan is linked to Asn256.

This sequence belongs to the TMEM106 family. In terms of assembly, can form homomers. Interacts (via N-terminus) with MAP6 (via C-terminus). Interacts (via C-terminus) with the vacuolar-type ATPase subunit ATP6AP1. Interacts (via N-terminus) with AP2M1 and CLTC. Interacts with TMEM106C. As to quaternary structure, (Microbial infection) Interacts with SARS coronavirus-2/SARS-CoV-2 spike protein (via RBD domain). As to expression, expressed in the brain, including in the frontal cortex (at protein level). Expressed in lung epithelial cells.

Its subcellular location is the late endosome membrane. The protein resides in the lysosome membrane. The protein localises to the cell membrane. In terms of biological role, in neurons, involved in the transport of late endosomes/lysosomes. May be involved in dendrite morphogenesis and maintenance by regulating lysosomal trafficking. May act as a molecular brake for retrograde transport of late endosomes/lysosomes, possibly via its interaction with MAP6. In motoneurons, may mediate the axonal transport of lysosomes and axonal sorting at the initial segment. It remains unclear whether TMEM106B affects the transport of moving lysosomes in the anterograde or retrograde direction in neurites and whether it is important in the sorting of lysosomes in axons or in dendrites. In neurons, may also play a role in the regulation of lysosomal size and responsiveness to stress. Required for proper lysosomal acidification. (Microbial infection) Plays a role in human coronavirus SARS-CoV-2 infection, but not in common cold coronaviruses HCoV-229E and HCoV-OC43 infections. Involved in ACE2-independent SARS-CoV-2 cell entry. Required for post-endocytic stage of virus entry, facilitates spike-mediated membrane fusion. Virus attachment and endocytosis can also be mediated by other cell surface receptors. The polypeptide is Transmembrane protein 106B (Homo sapiens (Human)).